A 567-amino-acid polypeptide reads, in one-letter code: MKKVPSDLEIAQAHEMIPIAEIAKNIGLGEDDIDLYGKYKAKISLDVLRKFNDRAMGKLIDITAITPTPLGEGKTVTTIGLCQGLGKIGKKVITTLRQPSMGPVFGIKGGAAGGGYSQVVPMEDINIHFTGDIHAVEAANNLLAAMIDTSILLGNPLNIDPMTVMWNRVLDTNDRALRDIVVGLGGKENGYPRQTSFDMAVASEVMAILALAENLHDLRQRLGRIIVAYTYDGKPVTAEDLKAAGAMTVIMKEALKPNLVQTLEGQACIMHAGPFANIAHGNNSVLADKIALNLADYVVTESGFGSDLGMEKFMDIKCRQSGLRPSCVVITCTIRALKMHGGLGNVVAGKPLPEELTRENLPALEKGCANLAHHIKVASYYGVPVVVSINRFTPDTDAEVDLVRKKALEAGALGAYPITVWAEGGEGAIELAEAVVAACEKTADFQLLYPDNLSIKEKIEVLATKVYNADGVVFEPLAERKIKQFEDLGLGHLPICMAKTHLSISHDPAMKGLPKNYIFPIRDIRASVGAGFLYPLAGAMRTMPGLGSKPAAHNVDIDEYGRTVGLF.

68 to 75 lines the ATP pocket; the sequence is TPLGEGKT.

The protein belongs to the formate--tetrahydrofolate ligase family.

It catalyses the reaction (6S)-5,6,7,8-tetrahydrofolate + formate + ATP = (6R)-10-formyltetrahydrofolate + ADP + phosphate. Its pathway is one-carbon metabolism; tetrahydrofolate interconversion. In Desulforamulus reducens (strain ATCC BAA-1160 / DSM 100696 / MI-1) (Desulfotomaculum reducens), this protein is Formate--tetrahydrofolate ligase.